Consider the following 601-residue polypeptide: Elongation factor 4 (601 aa).

The 183-residue stretch at lysine 7–glutamine 189 folds into the tr-type G domain. GTP-binding positions include aspartate 19–threonine 24 and asparagine 136–aspartate 139.

This sequence belongs to the TRAFAC class translation factor GTPase superfamily. Classic translation factor GTPase family. LepA subfamily.

Its subcellular location is the cell inner membrane. It carries out the reaction GTP + H2O = GDP + phosphate + H(+). Required for accurate and efficient protein synthesis under certain stress conditions. May act as a fidelity factor of the translation reaction, by catalyzing a one-codon backward translocation of tRNAs on improperly translocated ribosomes. Back-translocation proceeds from a post-translocation (POST) complex to a pre-translocation (PRE) complex, thus giving elongation factor G a second chance to translocate the tRNAs correctly. Binds to ribosomes in a GTP-dependent manner. This chain is Elongation factor 4, found in Methylocella silvestris (strain DSM 15510 / CIP 108128 / LMG 27833 / NCIMB 13906 / BL2).